Consider the following 521-residue polypeptide: 3,4-dihydroxyphenylacetaldehyde synthase (521 aa).

Residue lysine 306 is modified to N6-(pyridoxal phosphate)lysine.

The protein belongs to the group II decarboxylase family. Pyridoxal 5'-phosphate is required as a cofactor. As to expression, highly expressed in the cuticle and midgut. Low expression in the head and thorax.

The catalysed reaction is L-dopa + O2 + H2O + H(+) = 3,4-dihydroxyphenylacetaldehyde + H2O2 + NH4(+) + CO2. In terms of biological role, catalyzes the decarboxylation-oxidative deamination of L-3,4-dihydroxyphenylalanine (L-DOPA) to 3,4-dihydroxylphenylacetaldehyde (DHPAA). Involved in cuticle development. Probably responsible for the protein cross-linking during the development of flexible cuticles. The sequence is that of 3,4-dihydroxyphenylacetaldehyde synthase from Aedes aegypti (Yellowfever mosquito).